We begin with the raw amino-acid sequence, 544 residues long: MAKDIKFSEDARRSMLRGVDKLADAVKVTLGPKGRNVVLEKKFGSPLITNDGVTIAKEIELEDAFENMGAKLVAEVASKTNDIAGDGTTTATVLAQAMIREGLKNVTSGANPMVIRKGIEKATQVAVEELSKISKPIEGKDSIAQVAAISSADDEVGKIIAEAMERVGNDGVITIEESKGFSTELEVVEGMQFDRGYASPYMVTDSDKMEAVLDNPYVLITDKKISNIQEVLPVLEQVVQQGKPILIIAEDVEGEALATLVVNKLRGTFNAVAVKAPGFGDRRKAMLEDIAILTGGEVITEDLGLDLKSANITQLGRASKVVVTKENTTIVEGAGESDKIAARVNQIKAQIEETTSDFDKEKLQERLAKLAGGVAVLKVGAATETEMKERKLRIEDALNSTRAAVEEGIVAGGGTALVNVIKAVSSIGAEGDEATGVNIVLRALEEPVRQIAHNAGLEGSVIVERLKKEEAGFGFNAATGEWVNMVEAGIVDPTKVTRSALQHAASVSAMFLTTEAVIADKPEENEGGGGMPDMGGMGGMGGMM.

Residues 29–32 (TLGP), 86–90 (DGTTT), Gly413, 476–478 (NAA), and Asp492 each bind ATP.

It belongs to the chaperonin (HSP60) family. Forms a cylinder of 14 subunits composed of two heptameric rings stacked back-to-back. Interacts with the co-chaperonin GroES.

It is found in the cytoplasm. It carries out the reaction ATP + H2O + a folded polypeptide = ADP + phosphate + an unfolded polypeptide.. In terms of biological role, together with its co-chaperonin GroES, plays an essential role in assisting protein folding. The GroEL-GroES system forms a nano-cage that allows encapsulation of the non-native substrate proteins and provides a physical environment optimized to promote and accelerate protein folding. In Halalkalibacterium halodurans (strain ATCC BAA-125 / DSM 18197 / FERM 7344 / JCM 9153 / C-125) (Bacillus halodurans), this protein is Chaperonin GroEL.